A 351-amino-acid polypeptide reads, in one-letter code: UDP-glucose 4-epimerase 5 (351 aa).

NAD(+) is bound by residues 13–15 (GYI), 34–38 (DNLDN), 64–65 (DL), Phe86, and Lys90. 130-132 (SAT) contributes to the substrate binding site. Tyr154 (proton acceptor) is an active-site residue. Residues Lys158 and Tyr182 each coordinate NAD(+). Substrate-binding positions include 182 to 184 (YFN), 203 to 205 (NNL), 221 to 223 (TVF), Arg236, and 298 to 301 (RPGD).

It belongs to the NAD(P)-dependent epimerase/dehydratase family. In terms of assembly, forms homodimers and heterodimers. The cofactor is NAD(+). Widely expressed.

The catalysed reaction is UDP-alpha-D-glucose = UDP-alpha-D-galactose. Its pathway is carbohydrate metabolism; galactose metabolism. Enhanced activity by NaCl. Inhibited by UDP. In terms of biological role, catalyzes the interconversion between UDP-glucose and UDP-galactose. This chain is UDP-glucose 4-epimerase 5, found in Arabidopsis thaliana (Mouse-ear cress).